The primary structure comprises 245 residues: Uridylate kinase (245 aa).

Residue 20–23 (KLSG) coordinates ATP. A UMP-binding site is contributed by G60. ATP-binding residues include G61 and R65. Residues D80 and 141–148 (AGLPYFST) contribute to the UMP site. ATP contacts are provided by Y175 and D178.

The protein belongs to the UMP kinase family. In terms of assembly, homohexamer.

It localises to the cytoplasm. The enzyme catalyses UMP + ATP = UDP + ADP. Its pathway is pyrimidine metabolism; CTP biosynthesis via de novo pathway; UDP from UMP (UMPK route): step 1/1. Inhibited by UTP. Its function is as follows. Catalyzes the reversible phosphorylation of UMP to UDP. The sequence is that of Uridylate kinase from Paenarthrobacter aurescens (strain TC1).